The primary structure comprises 216 residues: GTP cyclohydrolase-2 (216 aa).

A GTP-binding site is contributed by 50–54 (RIHSE). Residues Cys-55, Cys-66, and Cys-68 each coordinate Zn(2+). GTP-binding positions include Gln-71, 93 to 95 (EGR), and Thr-115. The active-site Proton acceptor is Asp-127. Arg-129 functions as the Nucleophile in the catalytic mechanism. The GTP site is built by Thr-150 and Lys-155.

It belongs to the GTP cyclohydrolase II family. Zn(2+) serves as cofactor.

The enzyme catalyses GTP + 4 H2O = 2,5-diamino-6-hydroxy-4-(5-phosphoribosylamino)-pyrimidine + formate + 2 phosphate + 3 H(+). It functions in the pathway cofactor biosynthesis; riboflavin biosynthesis; 5-amino-6-(D-ribitylamino)uracil from GTP: step 1/4. In terms of biological role, catalyzes the conversion of GTP to 2,5-diamino-6-ribosylamino-4(3H)-pyrimidinone 5'-phosphate (DARP), formate and pyrophosphate. The chain is GTP cyclohydrolase-2 from Histophilus somni (strain 129Pt) (Haemophilus somnus).